We begin with the raw amino-acid sequence, 431 residues long: Selenocysteine lyase (431 aa).

Position 239 is an N6-(pyridoxal phosphate)lysine (Lys239). Cys367 functions as the S-selanylcysteine intermediate in the catalytic mechanism.

This sequence belongs to the class-V pyridoxal-phosphate-dependent aminotransferase family. In terms of assembly, homodimer. Pyridoxal 5'-phosphate is required as a cofactor.

It localises to the cytoplasm. Its subcellular location is the cytosol. The catalysed reaction is L-selenocysteine + AH2 = hydrogenselenide + L-alanine + A + H(+). Functionally, catalyzes the decomposition of L-selenocysteine to L-alanine and elemental selenium. The chain is Selenocysteine lyase (scly) from Xenopus tropicalis (Western clawed frog).